The chain runs to 409 residues: uncharacterized protein (409 aa).

A signal peptide spans 1-26; that stretch reads MKKELLASLVLCLSLSPLVSTNEVFA.

This is an uncharacterized protein from Bacillus subtilis (strain 168).